Here is a 333-residue protein sequence, read N- to C-terminus: D-fructose 1,6-bisphosphatase class 2/sedoheptulose 1,7-bisphosphatase (333 aa).

Mn(2+) contacts are provided by D33, E57, D85, and E88. Substrate is bound by residues 88 to 90 (EGT), Y119, 164 to 166 (RTR), and 186 to 188 (DGD). E213 serves as a coordination point for Mn(2+).

Belongs to the FBPase class 2 family. In terms of assembly, homotetramer. Mn(2+) serves as cofactor.

The enzyme catalyses beta-D-fructose 1,6-bisphosphate + H2O = beta-D-fructose 6-phosphate + phosphate. It carries out the reaction D-sedoheptulose 1,7-bisphosphate + H2O = D-sedoheptulose 7-phosphate + phosphate. The protein operates within carbohydrate biosynthesis; Calvin cycle. Functionally, catalyzes the hydrolysis of fructose 1,6-bisphosphate (Fru 1,6-P2) and sedoheptulose 1,7-bisphosphate (Sed 1,7-P2) to fructose 6-phosphate and sedoheptulose 7-phosphate, respectively. The sequence is that of D-fructose 1,6-bisphosphatase class 2/sedoheptulose 1,7-bisphosphatase from Prochlorococcus marinus (strain MIT 9301).